The primary structure comprises 544 residues: U1 small nuclear ribonucleoprotein component PRP42 (544 aa).

5 HAT repeats span residues leucine 7–lysine 39, glutamine 51–lysine 83, glycine 85–asparagine 118, serine 121–serine 156, and lysine 163–aspartate 195. The Nuclear localization signal motif lies at lysine 230 to lysine 235. HAT repeat units follow at residues phenylalanine 255–threonine 288, glutamine 290–asparagine 322, asparagine 366–phenylalanine 397, and valine 456–phenylalanine 488.

Component of the 18S U1 snRNP particle, a subcomplex of the spliceosome.

The protein resides in the nucleus. Its function is as follows. Essential component of the U1 snRNP particle, which recognizes and binds the 5'-splice site of pre-mRNA. Together with other non-snRNP factors, U1 snRNP forms the spliceosomal commitment complex, that targets pre-mRNA to the splicing pathway. U1 snRNP is cotranscriptionally recruited to intron-containing genes. Required for U1 snRNP biogenesis. The chain is U1 small nuclear ribonucleoprotein component PRP42 (PRP42) from Saccharomyces cerevisiae (strain ATCC 204508 / S288c) (Baker's yeast).